A 550-amino-acid polypeptide reads, in one-letter code: MSRQLNIKSGGDKGGFSGHSAVVLRKVGGSAASYRAPSKGAGAAFGSRSLYSLCRGDLCVPLKVAGSSVRTGGYNFRLGSGYGGVRASSFAGSMFGSVVLGPVCPSMCPPGGIHQVTVNKSLLAPLNVELDPEIQKVRAQEREQIMALNNKFASFIDKVRFLEQQNQVLGTKWELLQQMDLNNCRKNLEPILEGYIGNLRKQLEMLSGDRLRLDSELKGMRDLVEDYKKRYEVEINQRTAAENDFVVLKKDADAAYTVKVELQAKVDSLDKDIKFLKCLYDAEVAQIQTHTSETSVILSMDNNRYLDLDSIIAEVRAQYEDIALKSKAEAEALYQSKIQELQLAAGRHGDDLKHTKNEMSELNRLIQRIRCEIANVKKQAFSVCSKPAPCPLQCANLETAIADAEQRGDSALKDARAKLDELEAAMHQAKEELARMLREYQELMSLKLALDMEIATYSKLLEGEECWMSGENPSSVSISVISSSASSFGYHPGSSASTDLGASTMASTGTSSSSSTQSGQTRAKGARVGDPKDSQDKSTPVSSRARKAAR.

Residues 1–140 (MSRQLNIKSG…DPEIQKVRAQ (140 aa)) are head. The segment at 141 to 176 (EREQIMALNNKFASFIDKVRFLEQQNQVLGTKWELL) is coil 1A. The IF rod domain maps to 141-468 (EREQIMALNN…KLLEGEECWM (328 aa)). The interval 177–195 (QQMDLNNCRKNLEPILEGY) is linker 1. A coil 1B region spans residues 196–287 (IGNLRKQLEM…CLYDAEVAQI (92 aa)). The segment at 288–311 (QTHTSETSVILSMDNNRYLDLDSI) is linker 12. The tract at residues 312–464 (IAEVRAQYED…ATYSKLLEGE (153 aa)) is coil 2. The tail stretch occupies residues 465-550 (ECWMSGENPS…VSSRARKAAR (86 aa)). Positions 491 to 550 (HPGSSASTDLGASTMASTGTSSSSSTQSGQTRAKGARVGDPKDSQDKSTPVSSRARKAAR) are disordered. Low complexity predominate over residues 502–521 (ASTMASTGTSSSSSTQSGQT). The segment covering 527-536 (RVGDPKDSQD) has biased composition (basic and acidic residues).

Belongs to the intermediate filament family. In terms of assembly, heterotetramer of two type I and two type II keratins.

Its function is as follows. Has a role in hair formation. Specific component of keratin intermediate filaments in the inner root sheath (IRS) of the hair follicle. The protein is Keratin, type II cytoskeletal 74 (KRT74) of Bos taurus (Bovine).